Reading from the N-terminus, the 437-residue chain is GTPase Der (437 aa).

EngA-type G domains follow at residues 3–168 (PLIA…PVQE) and 178–353 (TNLA…ENRS). Residues 9 to 16 (GRPNVGKS), 56 to 60 (DTGGY), 120 to 123 (NKVE), 184 to 191 (GRPNVGKS), 231 to 235 (DTAGL), and 296 to 299 (NKWD) each bind GTP. In terms of domain architecture, KH-like spans 354–437 (RKITTSALNR…VTVSLRFFKK (84 aa)).

Belongs to the TRAFAC class TrmE-Era-EngA-EngB-Septin-like GTPase superfamily. EngA (Der) GTPase family. As to quaternary structure, associates with the 50S ribosomal subunit.

In terms of biological role, GTPase that plays an essential role in the late steps of ribosome biogenesis. In Chlorobium phaeobacteroides (strain DSM 266 / SMG 266 / 2430), this protein is GTPase Der.